A 216-amino-acid polypeptide reads, in one-letter code: SPbeta prophage-derived uncharacterized protein YomX (216 aa).

The sequence is that of SPbeta prophage-derived uncharacterized protein YomX (yomX) from Bacillus subtilis (strain 168).